The following is a 279-amino-acid chain: Bifunctional protein FolD (279 aa).

NADP(+) contacts are provided by residues 164–166 (GRS), S189, and I230.

This sequence belongs to the tetrahydrofolate dehydrogenase/cyclohydrolase family. In terms of assembly, homodimer.

It catalyses the reaction (6R)-5,10-methylene-5,6,7,8-tetrahydrofolate + NADP(+) = (6R)-5,10-methenyltetrahydrofolate + NADPH. It carries out the reaction (6R)-5,10-methenyltetrahydrofolate + H2O = (6R)-10-formyltetrahydrofolate + H(+). It functions in the pathway one-carbon metabolism; tetrahydrofolate interconversion. Functionally, catalyzes the oxidation of 5,10-methylenetetrahydrofolate to 5,10-methenyltetrahydrofolate and then the hydrolysis of 5,10-methenyltetrahydrofolate to 10-formyltetrahydrofolate. In Agathobacter rectalis (strain ATCC 33656 / DSM 3377 / JCM 17463 / KCTC 5835 / VPI 0990) (Eubacterium rectale), this protein is Bifunctional protein FolD.